A 327-amino-acid chain; its full sequence is Spermidine/putrescine import ATP-binding protein PotA (327 aa).

Positions 5–235 (IKVEAVEKHF…PKTLFVATFI (231 aa)) constitute an ABC transporter domain. Residue 37–44 (GPSGCGKT) coordinates ATP.

The protein belongs to the ABC transporter superfamily. Spermidine/putrescine importer (TC 3.A.1.11.1) family. In terms of assembly, the complex is composed of two ATP-binding proteins (PotA), two transmembrane proteins (PotB and PotC) and a solute-binding protein (PotD).

It is found in the cell membrane. The catalysed reaction is ATP + H2O + polyamine-[polyamine-binding protein]Side 1 = ADP + phosphate + polyamineSide 2 + [polyamine-binding protein]Side 1.. Part of the ABC transporter complex PotABCD involved in spermidine/putrescine import. Responsible for energy coupling to the transport system. The chain is Spermidine/putrescine import ATP-binding protein PotA from Bacillus cereus (strain ATCC 14579 / DSM 31 / CCUG 7414 / JCM 2152 / NBRC 15305 / NCIMB 9373 / NCTC 2599 / NRRL B-3711).